A 511-amino-acid polypeptide reads, in one-letter code: Lysine--tRNA ligase (511 aa).

Residues Glu-421 and Glu-428 each contribute to the Mg(2+) site.

The protein belongs to the class-II aminoacyl-tRNA synthetase family. In terms of assembly, homodimer. Mg(2+) is required as a cofactor.

Its subcellular location is the cytoplasm. It catalyses the reaction tRNA(Lys) + L-lysine + ATP = L-lysyl-tRNA(Lys) + AMP + diphosphate. The sequence is that of Lysine--tRNA ligase from Herminiimonas arsenicoxydans.